Consider the following 514-residue polypeptide: MTHTATEPGTSLPLRHRSIAIGAGSLAVLLGALDTYVVVSVITDIMTSVGIALNNIQQVTPIVTGYLLGYIAAMPLLGQASDRFGRRLILQLALAGFAIGSVITALSTDLTMLVSGRVIQGVASGALLPVTLALGADLWSQRNRATVLGGIGAAQELGSVLGPLYGVLCVWLFGSWTAIFWVNVPLAIIAIVLVQFSVPAHQHDPDRPKVDVVGGALLAVALGLLVVGLYSPDPKVSALPEWALPVLSGSGVAFLAFILWESRAKTRLIKPEGVRFGPFFAALAASLAAGAALMVTLVNIELLGQGVLQMDKADAVFLLSRFLVALPIGAVIGGWLATRFGDRIIAVIGMLIAAFGYYLISGWPVDVLAAVHNFGFFTLPRLDTDLVVAGIGLGLVIGPLSSAALRVVPAAQHGIASALVVVARMTGMLIGMAALGGWGIHRFYQNFDALAAKEPKPTGKPNLLELQQQLLNRSITAYSEMYSEMFAITAVVCVIAAVIAIFVGSHRKSGHEAQ.

11 helical membrane passes run Ile-19–Val-39, Gln-58–Gly-78, Leu-88–Thr-108, Val-118–Leu-138, Leu-157–Thr-177, Ala-178–Val-198, Val-210–Tyr-230, Leu-239–Leu-259, Pro-278–Val-298, Val-316–Leu-336, and Ile-344–Pro-364. Residues Val-371–Pro-380 form a beta-hairpin region. The next 3 membrane-spanning stretches (helical) occupy residues Asp-385–Leu-405, Val-420–Ile-440, and Met-485–Ser-505.

Belongs to the major facilitator superfamily. P55 (TC 2.A.1.3.34) family.

Its subcellular location is the cell inner membrane. In terms of biological role, in association with lipoprotein LprG probably transports triacyglycerides (TAG) across the inner cell membrane into the periplasm; TAG probably regulates lipid metabolism and growth regulation and plays a structural role in the outer membrane. TAG (and maybe other lipids) enters the central cavity of the P55 transporter from within the cell inner membrane via clefts on the cytoplasmic face of P55 between TM5-TM8 and TM2-TM11. From there the lipid is probably transferred to the hydrophobic cavity of LprG. Involved in drug susceptibilty, its expression partially complements the antibiotic susceptibilty of a double lprG-mfs deletion. Probably does not function as a bona fide drug efflux pump, but instead plays a role in outer membrane biogenesis. Probably required with LprG for normal surface localization of lipoarabinomannan (LAM). The chain is Triacylglyceride transporter MAB_2807 from Mycobacteroides abscessus (strain ATCC 19977 / DSM 44196 / CCUG 20993 / CIP 104536 / JCM 13569 / NCTC 13031 / TMC 1543 / L948) (Mycobacterium abscessus).